The chain runs to 78 residues: Acyl carrier protein (78 aa).

The Carrier domain maps to 2-77 (SDTADRVQKI…DATKYIEEHK (76 aa)). Residue Ser-37 is modified to O-(pantetheine 4'-phosphoryl)serine.

The protein belongs to the acyl carrier protein (ACP) family. In terms of processing, 4'-phosphopantetheine is transferred from CoA to a specific serine of apo-ACP by AcpS. This modification is essential for activity because fatty acids are bound in thioester linkage to the sulfhydryl of the prosthetic group.

The protein localises to the cytoplasm. It functions in the pathway lipid metabolism; fatty acid biosynthesis. In terms of biological role, carrier of the growing fatty acid chain in fatty acid biosynthesis. This is Acyl carrier protein from Erythrobacter litoralis (strain HTCC2594).